Reading from the N-terminus, the 106-residue chain is UPF0145 protein Athe_0545 (106 aa).

This sequence belongs to the UPF0145 family.

This Caldicellulosiruptor bescii (strain ATCC BAA-1888 / DSM 6725 / KCTC 15123 / Z-1320) (Anaerocellum thermophilum) protein is UPF0145 protein Athe_0545.